The chain runs to 101 residues: Protein Tat (101 aa).

Residues 1–24 (MEPIDPNLEPWNHPGSQPKTACNN) form an interaction with human CREBBP region. The interval 1 to 48 (MEPIDPNLEPWNHPGSQPKTACNNCYCKQCCYHCQLCFTKKGLGISYG) is transactivation. 3 residues coordinate Zn(2+): cysteine 22, cysteine 25, and cysteine 27. Positions 22–37 (CNNCYCKQCCYHCQLC) are cysteine-rich. Lysine 28 is subject to N6-acetyllysine; by host PCAF. Positions 30, 33, 34, and 37 each coordinate Zn(2+). The segment at 38–48 (FTKKGLGISYG) is core. Positions 48–101 (GRRKRKQRRRTSESSQNHQDPVPKQPLSQPGGIETGQKKSKKEVESQTTSDQFA) are disordered. A Nuclear localization signal, RNA-binding (TAR), and protein transduction motif is present at residues 49–57 (RRKRKQRRR). Positions 49 to 86 (RRKRKQRRRTSESSQNHQDPVPKQPLSQPGGIETGQKK) are interaction with the host capping enzyme RNGTT. Lysine 51 carries the N6-acetyllysine; by host EP300 and GCN5L2 modification. Arginine 52 carries the asymmetric dimethylarginine; by host PRMT6 modification. Residue lysine 71 forms a Glycyl lysine isopeptide (Lys-Gly) (interchain with G-Cter in ubiquitin) linkage.

This sequence belongs to the lentiviruses Tat family. As to quaternary structure, interacts with host CCNT1. Associates with the P-TEFb complex composed at least of Tat, P-TEFb (CDK9 and CCNT1), TAR RNA, RNA Pol II. Recruits the HATs CREBBP, TAF1/TFIID, EP300, PCAF and GCN5L2. Interacts with host KAT5/Tip60; this interaction targets the latter to degradation. Interacts with the host deacetylase SIRT1. Interacts with host capping enzyme RNGTT; this interaction stimulates RNGTT. Binds to host KDR, and to the host integrins ITGAV/ITGB3 and ITGA5/ITGB1. Interacts with host KPNB1/importin beta-1 without previous binding to KPNA1/importin alpha-1. Interacts with EIF2AK2. Interacts with host nucleosome assembly protein NAP1L1; this interaction may be required for the transport of Tat within the nucleus, since the two proteins interact at the nuclear rim. Interacts with host C1QBP/SF2P32; this interaction involves lysine-acetylated Tat. Interacts with the host chemokine receptors CCR2, CCR3 and CXCR4. Interacts with host DPP4/CD26; this interaction may trigger an anti-proliferative effect. Interacts with host LDLR. Interacts with the host extracellular matrix metalloproteinase MMP1. Interacts with host PRMT6; this interaction mediates Tat's methylation. Interacts with, and is ubiquitinated by MDM2/Hdm2. Interacts with host PSMC3 and HTATIP2. Interacts with STAB1; this interaction may overcome SATB1-mediated repression of IL2 and IL2RA (interleukin) in T cells by binding to the same domain than HDAC1. Interacts (when acetylated) with human CDK13, thereby increasing HIV-1 mRNA splicing and promoting the production of the doubly spliced HIV-1 protein Nef. Interacts with host TBP; this interaction modulates the activity of transcriptional pre-initiation complex. Interacts with host RELA. Asymmetrical arginine methylation by host PRMT6 seems to diminish the transactivation capacity of Tat and affects the interaction with host CCNT1. In terms of processing, polyubiquitination by host MDM2 does not target Tat to degradation, but activates its transactivation function and fosters interaction with CCNT1 and TAR RNA. Post-translationally, phosphorylated by EIF2AK2 on serine and threonine residues adjacent to the basic region important for TAR RNA binding and function. Phosphorylation of Tat by EIF2AK2 is dependent on the prior activation of EIF2AK2 by dsRNA.

The protein resides in the host nucleus. It is found in the host nucleolus. It localises to the host cytoplasm. Its subcellular location is the secreted. Transcriptional activator that increases RNA Pol II processivity, thereby increasing the level of full-length viral transcripts. Recognizes a hairpin structure at the 5'-LTR of the nascent viral mRNAs referred to as the transactivation responsive RNA element (TAR) and recruits the cyclin T1-CDK9 complex (P-TEFb complex) that will in turn hyperphosphorylate the RNA polymerase II to allow efficient elongation. The CDK9 component of P-TEFb and other Tat-activated kinases hyperphosphorylate the C-terminus of RNA Pol II that becomes stabilized and much more processive. Other factors such as HTATSF1/Tat-SF1, SUPT5H/SPT5, and HTATIP2 are also important for Tat's function. Besides its effect on RNA Pol II processivity, Tat induces chromatin remodeling of proviral genes by recruiting the histone acetyltransferases (HATs) CREBBP, EP300 and PCAF to the chromatin. This also contributes to the increase in proviral transcription rate, especially when the provirus integrates in transcriptionally silent region of the host genome. To ensure maximal activation of the LTR, Tat mediates nuclear translocation of NF-kappa-B by interacting with host RELA. Through its interaction with host TBP, Tat may also modulate transcription initiation. Tat can reactivate a latently infected cell by penetrating in it and transactivating its LTR promoter. In the cytoplasm, Tat is thought to act as a translational activator of HIV-1 mRNAs. In terms of biological role, extracellular circulating Tat can be endocytosed by surrounding uninfected cells via the binding to several surface receptors such as CD26, CXCR4, heparan sulfate proteoglycans (HSPG) or LDLR. Neurons are rarely infected, but they internalize Tat via their LDLR. Through its interaction with nuclear HATs, Tat is potentially able to control the acetylation-dependent cellular gene expression. Modulates the expression of many cellular genes involved in cell survival, proliferation or in coding for cytokines or cytokine receptors. Tat plays a role in T-cell and neurons apoptosis. Tat induced neurotoxicity and apoptosis probably contribute to neuroAIDS. Circulating Tat also acts as a chemokine-like and/or growth factor-like molecule that binds to specific receptors on the surface of the cells, affecting many cellular pathways. In the vascular system, Tat binds to ITGAV/ITGB3 and ITGA5/ITGB1 integrins dimers at the surface of endothelial cells and competes with bFGF for heparin-binding sites, leading to an excess of soluble bFGF. This Pan troglodytes (Chimpanzee) protein is Protein Tat.